The primary structure comprises 179 residues: Crossover junction endodeoxyribonuclease RuvC (179 aa).

Active-site residues include aspartate 7, glutamate 67, and aspartate 139. Residues aspartate 7, glutamate 67, and aspartate 139 each contribute to the Mg(2+) site.

Belongs to the RuvC family. As to quaternary structure, homodimer which binds Holliday junction (HJ) DNA. The HJ becomes 2-fold symmetrical on binding to RuvC with unstacked arms; it has a different conformation from HJ DNA in complex with RuvA. In the full resolvosome a probable DNA-RuvA(4)-RuvB(12)-RuvC(2) complex forms which resolves the HJ. It depends on Mg(2+) as a cofactor.

The protein localises to the cytoplasm. It carries out the reaction Endonucleolytic cleavage at a junction such as a reciprocal single-stranded crossover between two homologous DNA duplexes (Holliday junction).. Functionally, the RuvA-RuvB-RuvC complex processes Holliday junction (HJ) DNA during genetic recombination and DNA repair. Endonuclease that resolves HJ intermediates. Cleaves cruciform DNA by making single-stranded nicks across the HJ at symmetrical positions within the homologous arms, yielding a 5'-phosphate and a 3'-hydroxyl group; requires a central core of homology in the junction. The consensus cleavage sequence is 5'-(A/T)TT(C/G)-3'. Cleavage occurs on the 3'-side of the TT dinucleotide at the point of strand exchange. HJ branch migration catalyzed by RuvA-RuvB allows RuvC to scan DNA until it finds its consensus sequence, where it cleaves and resolves the cruciform DNA. The sequence is that of Crossover junction endodeoxyribonuclease RuvC from Sorangium cellulosum (strain So ce56) (Polyangium cellulosum (strain So ce56)).